The following is a 532-amino-acid chain: Flavin-containing monooxygenase 1 (532 aa).

Ala2 is subject to N-acetylalanine. Residues 2–510 (AKRVAIVGAG…TRIVKESPSP (509 aa)) are Lumenal-facing. Residues 9 to 13 (GAGVS), Glu32, 40 to 41 (LW), and 61 to 62 (NS) each bind FAD. 60–61 (SN) lines the NADP(+) pocket. N-linked (GlcNAc...) (high mannose) asparagine glycosylation is present at Asn120. An NADP(+)-binding site is contributed by 195 to 198 (SGTD). The helical transmembrane segment at 511-531 (FASLLKLFSFLALLVAIFQIF) threads the bilayer. Leu532 is a topological domain (cytoplasmic).

Belongs to the FMO family. The cofactor is FAD. Liver.

It is found in the endoplasmic reticulum membrane. The enzyme catalyses hypotaurine + NADPH + O2 + H(+) = taurine + NADP(+) + H2O. The catalysed reaction is hypotaurine + NADH + O2 + H(+) = taurine + NAD(+) + H2O. It catalyses the reaction trimethylamine + NADPH + O2 = trimethylamine N-oxide + NADP(+) + H2O. It carries out the reaction N,N-dimethylaniline + NADPH + O2 + H(+) = N,N-dimethylaniline N-oxide + NADP(+) + H2O. Broad spectrum monooxygenase that catalyzes the oxygenation of a wide variety of nitrogen- and sulfur-containing compounds including xenobiotics. Catalyzes the S-oxygenation of hypotaurine to produce taurine, an organic osmolyte involved in cell volume regulation as well as a variety of cytoprotective and developmental processes. In vitro, catalyzes the N-oxygenation of trimethylamine (TMA) to produce trimethylamine N-oxide (TMAO) and could therefore participate to the detoxification of this compound that is generated by the action of gut microbiota from dietary precursors such as choline, choline containing compounds, betaine or L-carnitine. The polypeptide is Flavin-containing monooxygenase 1 (FMO1) (Sus scrofa (Pig)).